Here is a 174-residue protein sequence, read N- to C-terminus: Type II restriction enzyme Bsp6I (174 aa).

It catalyses the reaction Endonucleolytic cleavage of DNA to give specific double-stranded fragments with terminal 5'-phosphates.. Its function is as follows. A P subtype restriction enzyme that recognizes the double-stranded sequence 5'-GCNGC-3' and cleaves after C-2. The polypeptide is Type II restriction enzyme Bsp6I (Bacillus sp. (strain RFL6)).